Consider the following 1306-residue polypeptide: Activating transcription factor 7-interacting protein 1 (1306 aa).

Met-1 bears the N-acetylmethionine mark. A disordered region spans residues 1-23 (MDSVEEPQKKVFKARKTMRASDR). Residue Lys-33 forms a Glycyl lysine isopeptide (Lys-Gly) (interchain with G-Cter in SUMO2) linkage. Residues Ser-57 and Ser-112 each carry the phosphoserine modification. Disordered regions lie at residues 104–470 (EDLN…SMET), 496–604 (LPVE…SKRR), 689–722 (AAKD…NNMT), 765–785 (VVSS…PAAP), 871–895 (PLPN…NSST), 920–1060 (RTSL…GPSQ), and 1152–1196 (AGPQ…STSL). 2 stretches are compositionally biased toward polar residues: residues 109–134 (EALS…SPAS) and 143–162 (VSDN…SDNP). The residue at position 124 (Thr-124) is a Phosphothreonine. Composition is skewed to low complexity over residues 185 to 212 (EEPP…CSEP), 246 to 261 (EAAS…ASDE), and 284 to 303 (PSGD…LPRS). The segment covering 432 to 441 (QSEKDEHKSP) has biased composition (basic and acidic residues). Phosphoserine is present on residues Ser-511, Ser-514, Ser-516, and Ser-533. Over residues 513 to 523 (GSPSKQESSEN) the composition is skewed to polar residues. 3 stretches are compositionally biased toward basic and acidic residues: residues 557-566 (EGEKSEKDGK), 592-601 (KSEDMDSVES), and 689-699 (AAKDDLKKRQE). The short motif at 587–605 (RRKRSKSEDMDSVESKRRR) is the Nuclear localization signal element. Lys-592 participates in a covalent cross-link: Glycyl lysine isopeptide (Lys-Gly) (interchain with G-Cter in SUMO2). Phosphoserine is present on Ser-593. An interaction with SETDB1 region spans residues 596 to 851 (MDSVESKRRR…NQPSGNVEFI (256 aa)). Positions 666 to 696 (NKRHKAVLTELQAKIARLTKRFGAAKDDLKK) form a coiled coil. Residues Ser-700 and Ser-707 each carry the phosphoserine modification. The span at 713–722 (NDTNSNNNMT) shows a compositional bias: polar residues. The span at 871–884 (PLPNPTKPNIPSVP) shows a compositional bias: pro residues. At Ser-933 the chain carries Phosphoserine. Glycyl lysine isopeptide (Lys-Gly) (interchain with G-Cter in SUMO2) cross-links involve residues Lys-944 and Lys-974. Polar residues predominate over residues 948-981 (STFSPPSSAEQNSSATPRIVTENQTNKTVDSSIN). Residues 987-1000 (STSQSGKASSSDSS) show a composition bias toward low complexity. Positions 1001 to 1011 (GVIDLTMDDEE) are interaction with SUMO. The span at 1022–1040 (SPPSSSTVSTSQPMSRPLQ) shows a compositional bias: low complexity. Residues 1054 to 1143 (PTSGPSQATI…RVPQTTTYVV (90 aa)) form the Fibronectin type-III 1 domain. Pro residues predominate over residues 1170–1187 (PRPLHPAPLPEAPQPQRL). The interaction with MBD1 stretch occupies residues 1190-1306 (EAASTSLPQK…TDVISSSQNS (117 aa)). The Fibronectin type-III 2 domain occupies 1196 to 1302 (LPQKPHLKLA…DPQSTDVISS (107 aa)).

This sequence belongs to the MCAF family. Interacts with MBD1; the interaction is enhanced when MBD1 is sumoylated. Interacts with SETDB1; the interaction protects SETDB1 from proteasomal degradation and is required to stimulate histone methyltransferase activity and facilitate the conversion of dimethylated to trimethylated H3 'Lys-9'. Interacts with SUMO ubiquitin-like proteins (SUMO1, SUNO2 and SUMO3), with a preference for SUMO2 and SUMO3. Interacts with SP1, ATF7 and ZHX1. Interacts with the general transcription machinery, including ERCC2, ERCC3, GTF2E1, GTF2E2 and POLR2A. In terms of tissue distribution, ubiquitously expressed at all stages studied.

It is found in the nucleus. Recruiter that couples transcriptional factors to general transcription apparatus and thereby modulates transcription regulation and chromatin formation. Can both act as an activator or a repressor depending on the context. Required for HUSH-mediated heterochromatin formation and gene silencing. Mediates MBD1-dependent transcriptional repression, probably by recruiting complexes containing SETDB1. Stabilizes SETDB1, is required to stimulate histone methyltransferase activity of SETDB1 and facilitates the conversion of dimethylated to trimethylated H3 'Lys-9' (H3K9me3). The complex formed with MBD1 and SETDB1 represses transcription and couples DNA methylation and histone H3 'Lys-9' trimethylation (H3K9me3). Facilitates telomerase TERT and TERC gene expression by SP1 in cancer cells. The polypeptide is Activating transcription factor 7-interacting protein 1 (Atf7ip) (Mus musculus (Mouse)).